A 278-amino-acid chain; its full sequence is ADP-dependent (S)-NAD(P)H-hydrate dehydratase (278 aa).

One can recognise a YjeF C-terminal domain in the interval 5–272 (TTEIVSRTII…TRIPTYMHRF (268 aa)). (6S)-NADPHX contacts are provided by A40, G103, and H152. G214 contacts AMP. Position 215 (D215) interacts with (6S)-NADPHX.

This sequence belongs to the NnrD/CARKD family. As to quaternary structure, homotetramer. Requires Mg(2+) as cofactor.

The enzyme catalyses (6S)-NADHX + ADP = AMP + phosphate + NADH + H(+). The catalysed reaction is (6S)-NADPHX + ADP = AMP + phosphate + NADPH + H(+). Catalyzes the dehydration of the S-form of NAD(P)HX at the expense of ADP, which is converted to AMP. Together with NAD(P)HX epimerase, which catalyzes the epimerization of the S- and R-forms, the enzyme allows the repair of both epimers of NAD(P)HX, a damaged form of NAD(P)H that is a result of enzymatic or heat-dependent hydration. This chain is ADP-dependent (S)-NAD(P)H-hydrate dehydratase, found in Lactiplantibacillus plantarum (strain ATCC BAA-793 / NCIMB 8826 / WCFS1) (Lactobacillus plantarum).